A 283-amino-acid polypeptide reads, in one-letter code: Thymidylate synthase (283 aa).

Residue R22 coordinates dUMP. The Nucleophile role is filled by C160. DUMP-binding positions include R180 to D183, N191, and H221 to Y223. A (6R)-5,10-methylene-5,6,7,8-tetrahydrofolate-binding site is contributed by D183. Residue S282 coordinates (6R)-5,10-methylene-5,6,7,8-tetrahydrofolate.

Belongs to the thymidylate synthase family. Bacterial-type ThyA subfamily. Homodimer.

It localises to the cytoplasm. The catalysed reaction is dUMP + (6R)-5,10-methylene-5,6,7,8-tetrahydrofolate = 7,8-dihydrofolate + dTMP. Its pathway is pyrimidine metabolism; dTTP biosynthesis. In terms of biological role, catalyzes the reductive methylation of 2'-deoxyuridine-5'-monophosphate (dUMP) to 2'-deoxythymidine-5'-monophosphate (dTMP) while utilizing 5,10-methylenetetrahydrofolate (mTHF) as the methyl donor and reductant in the reaction, yielding dihydrofolate (DHF) as a by-product. This enzymatic reaction provides an intracellular de novo source of dTMP, an essential precursor for DNA biosynthesis. In Haemophilus influenzae (strain PittEE), this protein is Thymidylate synthase.